The primary structure comprises 238 residues: Probable transcriptional regulatory protein SUB0364 (238 aa).

The protein belongs to the TACO1 family. YeeN subfamily.

Its subcellular location is the cytoplasm. This Streptococcus uberis (strain ATCC BAA-854 / 0140J) protein is Probable transcriptional regulatory protein SUB0364.